A 500-amino-acid polypeptide reads, in one-letter code: NAD(P)H-quinone oxidoreductase chain 4, chloroplastic (500 aa).

The next 13 membrane-spanning stretches (helical) occupy residues 4–24 (FPWL…MLFL), 35–55 (YTIS…CYNF), 87–107 (IGTI…AFPV), 134–154 (LLLF…LLSM), 167–187 (FILY…GISL), 211–231 (ILFY…IPLH), 242–262 (HYST…YGLV), 272–292 (AHSM…IYAA), 305–325 (IAYS…SITD), 330–350 (GAIL…FLAG), 386–406 (LALP…GIIT), 416–436 (IFII…LLSM), and 462–482 (LFLS…PDFV).

This sequence belongs to the complex I subunit 4 family.

Its subcellular location is the plastid. It localises to the chloroplast thylakoid membrane. It carries out the reaction a plastoquinone + NADH + (n+1) H(+)(in) = a plastoquinol + NAD(+) + n H(+)(out). The enzyme catalyses a plastoquinone + NADPH + (n+1) H(+)(in) = a plastoquinol + NADP(+) + n H(+)(out). In Crucihimalaya wallichii (Rock-cress), this protein is NAD(P)H-quinone oxidoreductase chain 4, chloroplastic.